The following is a 142-amino-acid chain: Hemoglobin subunit alpha (142 aa).

Ser-1 carries the N-acetylserine modification. The region spanning 1 to 142 is the Globin domain; the sequence is SLSDKDKAAV…LSLALAEKYR (142 aa). Heme b is bound by residues His-59 and His-88.

The protein belongs to the globin family. As to quaternary structure, heterotetramer of two alpha chains and two beta chains. In terms of tissue distribution, red blood cells.

In terms of biological role, involved in oxygen transport from gills to the various peripheral tissues. The polypeptide is Hemoglobin subunit alpha (Lycodes reticulatus (Arctic eelpout)).